We begin with the raw amino-acid sequence, 877 residues long: Oligopeptide transporter 2 (877 aa).

Residues 1–167 (MSETVKDKVI…DPTIPVETFR (167 aa)) are Cytoplasmic-facing. Residues 168-188 (AYFLAIIWSVIGSGFNEFFSH) form a helical membrane-spanning segment. Arginine 189 is a topological domain (extracellular). Residues 190–210 (VVSISLNTPIIQMFLYICGKA) traverse the membrane as a helical segment. Topologically, residues 211–240 (WAKTIPCWTITIRGRKYGINIDKPWTQKEQ) are cytoplasmic. Residues 241–261 (MFSTLLYAICQGAFYTHYNIL) form a helical membrane-spanning segment. The Extracellular segment spans residues 262-272 (TQKLFYHSAFS). A helical transmembrane segment spans residues 273–293 (FGYQFLLSLSVQFIGFGFAGI). Residues 294–334 (LRKFVVYPARALWPTVMPTIAINKALLGKEKHESGMSRYKF) lie on the Cytoplasmic side of the membrane. The chain crosses the membrane as a helical span at residues 335 to 355 (FFLTFFIMFIYNWFPTYIINI). Topologically, residues 356–374 (LNTFNWMTWIKPSNINLAN) are extracellular. An N-linked (GlcNAc...) asparagine glycan is attached at asparagine 374. A helical membrane pass occupies residues 375–395 (ITGGVTGLGINPISSFDWNVI). Over 396-404 (SFNSPLVYP) the chain is Cytoplasmic. Residues 405-425 (FWSYLTQYLGCILAALIVIAV) traverse the membrane as a helical segment. The Extracellular segment spans residues 426 to 480 (YYSNYMSCQYLPIFTNSLYTNTGHSFKVTEVLDSDNKLDVKKYQSYSPPYYSAGN). A helical transmembrane segment spans residues 481–501 (LVSYGAFICAYPLMITWSFIV). The Cytoplasmic portion of the chain corresponds to 502–553 (HSKLLFNAFKDWALNLWAMRKLKSWVTMFKSDYRALDDYDDPHSNAMKNYKE). The helical transmembrane segment at 554–574 (VPDWWYFAILIGSLVVGIAVV) threads the bilayer. The Extracellular segment spans residues 575–582 (EHYPTNTP). The helical transmembrane segment at 583–603 (VWGLFVCLGFNFVFLIPTTIL) threads the bilayer. At 604–614 (QATTGYSFGLN) the chain is on the cytoplasmic side. The chain crosses the membrane as a helical span at residues 615–635 (LLIEMVMGYALPGNPIAIMIL). Residues 636–671 (KAFGYNIDGQADNYVSNLKIAHYCKIPPMALFRGQC) are Extracellular-facing. Residues 672–692 (VIVFIQIFVNLGVLNWQISNI) form a helical membrane-spanning segment. Residues 693 to 730 (KDFCTPHQNAKFTCPDAVTYYNASVVWGAIGPKRIFNY) lie on the Cytoplasmic side of the membrane. Residues 731 to 751 (IYPIFKWCWLIGACIGIFFGV) traverse the membrane as a helical segment. The Extracellular portion of the chain corresponds to 752-766 (WKRWGKFYPRYFDPM). The helical transmembrane segment at 767–789 (LFVGGMLNMSPPYNLMYYTSGMI) threads the bilayer. The Cytoplasmic segment spans residues 790-811 (VSYISQYYMKRHHLNLWEKYNY). The chain crosses the membrane as a helical span at residues 812-832 (VLSAGFSTGLVLSAIIIFFAV). Residues 833–877 (QYKDTAFNWWGNTVPYAGADGVGYPLKNITDTANGYFGYAPGHYP) are Extracellular-facing. Asparagine 860 is a glycosylation site (N-linked (GlcNAc...) asparagine).

The protein belongs to the oligopeptide OPT transporter family.

The protein resides in the membrane. Its function is as follows. Transports tetra- and pentapeptides. Does not transport glutathione. The chain is Oligopeptide transporter 2 (OPT2) from Saccharomyces cerevisiae (strain ATCC 204508 / S288c) (Baker's yeast).